A 69-amino-acid chain; its full sequence is Purkinje cell protein 4-like protein 1 (69 aa).

Residues methionine 1–alanine 15 show a composition bias toward polar residues. Positions methionine 1 to glutamate 47 are disordered. Phosphothreonine is present on threonine 8. A compositionally biased stretch (basic and acidic residues) spans proline 18–glutamate 31. The region spanning threonine 46–serine 69 is the IQ domain.

The protein belongs to the PCP4 family.

The protein is Purkinje cell protein 4-like protein 1 (PCP4L1) of Bos taurus (Bovine).